The chain runs to 423 residues: Guanine nucleotide-binding protein subunit beta (423 aa).

7 WD repeats span residues 90–120, 132–162, 179–208, 220–256, 268–298, 348–377, and 389–419; these read GHNN…LIWD, LDSQ…TIYR, GHTC…ALWD, DHLG…YIWD, VNDS…NMYD, DNQG…VVWD, and GHGG…KIWS.

This sequence belongs to the WD repeat G protein beta family. As to quaternary structure, g proteins are composed of 3 units, alpha, beta and gamma. The beta-gamma subunit complex (STE4-STE18 complex) interacts with PLP1 and PLP2. Interacts with SYG1.

Implicated in the a- and alpha-factor response pathway. The beta and gamma chains of the putative yeast mating response pathway G protein play a positive role in initiation of the mating response. The beta and gamma chains are required for the GTPase activity, for replacement of GDP by GTP, and for G protein-effector interaction. The polypeptide is Guanine nucleotide-binding protein subunit beta (STE4) (Saccharomyces cerevisiae (strain ATCC 204508 / S288c) (Baker's yeast)).